A 92-amino-acid chain; its full sequence is Elongation factor 1-beta (92 aa).

The protein belongs to the EF-1-beta/EF-1-delta family.

Its function is as follows. Promotes the exchange of GDP for GTP in EF-1-alpha/GDP, thus allowing the regeneration of EF-1-alpha/GTP that could then be used to form the ternary complex EF-1-alpha/GTP/AAtRNA. The polypeptide is Elongation factor 1-beta (Korarchaeum cryptofilum (strain OPF8)).